A 384-amino-acid chain; its full sequence is Outer membrane protein assembly factor BamB (384 aa).

The signal sequence occupies residues 1–16; the sequence is MKIRILVLILCALTQG. Cys-17 carries the N-palmitoyl cysteine lipid modification. Cys-17 carries the S-diacylglycerol cysteine lipid modification.

Belongs to the BamB family. As to quaternary structure, part of the Bam complex.

It localises to the cell outer membrane. In terms of biological role, part of the outer membrane protein assembly complex, which is involved in assembly and insertion of beta-barrel proteins into the outer membrane. The chain is Outer membrane protein assembly factor BamB from Legionella pneumophila (strain Paris).